The following is a 25-amino-acid chain: Cytochrome c oxidase polypeptide VIIc (25 aa).

Residues 1-25 are disordered; sequence SHYSEGPGQNLPFSVQNKXRLLGMM.

Belongs to the cytochrome c oxidase VIIc family. As to quaternary structure, component of the cytochrome c oxidase (complex IV, CIV), a multisubunit enzyme composed of 14 subunits. The complex is composed of a catalytic core of 3 subunits MT-CO1, MT-CO2 and MT-CO3, encoded in the mitochondrial DNA, and 11 supernumerary subunits COX4I, COX5A, COX5B, COX6A, COX6B, COX6C, COX7A, COX7B, COX7C, COX8 and NDUFA4, which are encoded in the nuclear genome. The complex exists as a monomer or a dimer and forms supercomplexes (SCs) in the inner mitochondrial membrane with NADH-ubiquinone oxidoreductase (complex I, CI) and ubiquinol-cytochrome c oxidoreductase (cytochrome b-c1 complex, complex III, CIII), resulting in different assemblies (supercomplex SCI(1)III(2)IV(1) and megacomplex MCI(2)III(2)IV(2)). Interacts with RAB5IF.

It is found in the mitochondrion inner membrane. It participates in energy metabolism; oxidative phosphorylation. Component of the cytochrome c oxidase, the last enzyme in the mitochondrial electron transport chain which drives oxidative phosphorylation. The respiratory chain contains 3 multisubunit complexes succinate dehydrogenase (complex II, CII), ubiquinol-cytochrome c oxidoreductase (cytochrome b-c1 complex, complex III, CIII) and cytochrome c oxidase (complex IV, CIV), that cooperate to transfer electrons derived from NADH and succinate to molecular oxygen, creating an electrochemical gradient over the inner membrane that drives transmembrane transport and the ATP synthase. Cytochrome c oxidase is the component of the respiratory chain that catalyzes the reduction of oxygen to water. Electrons originating from reduced cytochrome c in the intermembrane space (IMS) are transferred via the dinuclear copper A center (CU(A)) of subunit 2 and heme A of subunit 1 to the active site in subunit 1, a binuclear center (BNC) formed by heme A3 and copper B (CU(B)). The BNC reduces molecular oxygen to 2 water molecules using 4 electrons from cytochrome c in the IMS and 4 protons from the mitochondrial matrix. The polypeptide is Cytochrome c oxidase polypeptide VIIc (Oncorhynchus mykiss (Rainbow trout)).